The sequence spans 369 residues: UDP-N-acetylglucosamine--N-acetylmuramyl-(pentapeptide) pyrophosphoryl-undecaprenol N-acetylglucosamine transferase (369 aa).

Residues 10 to 12 (TAG), Asn-124, Arg-166, Ser-196, Ile-251, and Gln-296 contribute to the UDP-N-acetyl-alpha-D-glucosamine site.

This sequence belongs to the glycosyltransferase 28 family. MurG subfamily.

Its subcellular location is the cell membrane. The enzyme catalyses di-trans,octa-cis-undecaprenyl diphospho-N-acetyl-alpha-D-muramoyl-L-alanyl-D-glutamyl-meso-2,6-diaminopimeloyl-D-alanyl-D-alanine + UDP-N-acetyl-alpha-D-glucosamine = di-trans,octa-cis-undecaprenyl diphospho-[N-acetyl-alpha-D-glucosaminyl-(1-&gt;4)]-N-acetyl-alpha-D-muramoyl-L-alanyl-D-glutamyl-meso-2,6-diaminopimeloyl-D-alanyl-D-alanine + UDP + H(+). It functions in the pathway cell wall biogenesis; peptidoglycan biosynthesis. Functionally, cell wall formation. Catalyzes the transfer of a GlcNAc subunit on undecaprenyl-pyrophosphoryl-MurNAc-pentapeptide (lipid intermediate I) to form undecaprenyl-pyrophosphoryl-MurNAc-(pentapeptide)GlcNAc (lipid intermediate II). The polypeptide is UDP-N-acetylglucosamine--N-acetylmuramyl-(pentapeptide) pyrophosphoryl-undecaprenol N-acetylglucosamine transferase (Acetivibrio thermocellus (strain ATCC 27405 / DSM 1237 / JCM 9322 / NBRC 103400 / NCIMB 10682 / NRRL B-4536 / VPI 7372) (Clostridium thermocellum)).